Here is a 125-residue protein sequence, read N- to C-terminus: Barwin (125 aa).

Residue Gln1 is modified to Pyrrolidone carboxylic acid. The Barwin domain maps to 1–125 (QQANDVRATY…VNYQFVDCRD (125 aa)). 3 disulfide bridges follow: Cys31–Cys63, Cys52–Cys86, and Cys66–Cys123.

Functionally, may be involved in a defense mechanism. Probable plant lectin. Binds weakly a chitin analog. This is Barwin from Hordeum vulgare (Barley).